The primary structure comprises 148 residues: MIHPLIQRLTTTLGYPLLDADGLDRQVRTQPFSVLFFAGDPQRFPEALDVAVILPELVKAFPQLAPALIAGADEARLQGRYGFSVWPSLVFLAGERYLGCLSRVLDWGEYLERIPAILAGENEDLPRIPVLSPESGTPSCSPMETSES.

The disordered stretch occupies residues 128-148 (IPVLSPESGTPSCSPMETSES). Residues 134-148 (ESGTPSCSPMETSES) show a composition bias toward polar residues.

This sequence belongs to the HupG/HyaE family.

The sequence is that of Hydrogenase expression/formation protein HoxO (hoxO) from Azotobacter vinelandii.